The primary structure comprises 356 residues: sn-glycerol-3-phosphate import ATP-binding protein UgpC (356 aa).

In terms of domain architecture, ABC transporter spans 4-235; the sequence is LKLQAVTKSW…PASLFVASFI (232 aa). Position 37–44 (37–44) interacts with ATP; the sequence is GPSGCGKS.

The protein belongs to the ABC transporter superfamily. sn-glycerol-3-phosphate importer (TC 3.A.1.1.3) family. In terms of assembly, the complex is composed of two ATP-binding proteins (UgpC), two transmembrane proteins (UgpA and UgpE) and a solute-binding protein (UgpB).

It is found in the cell inner membrane. It catalyses the reaction sn-glycerol 3-phosphate(out) + ATP + H2O = sn-glycerol 3-phosphate(in) + ADP + phosphate + H(+). Its function is as follows. Part of the ABC transporter complex UgpBAEC involved in sn-glycerol-3-phosphate (G3P) import. Responsible for energy coupling to the transport system. The sequence is that of sn-glycerol-3-phosphate import ATP-binding protein UgpC from Shigella sonnei (strain Ss046).